A 579-amino-acid chain; its full sequence is Mitochondrial distribution and morphology protein 31 (579 aa).

A mitochondrion-targeting transit peptide spans 1–47; sequence MSLFTRPFLRSPRQFSVARYVYWARSPALRSNLRIPSIAAASLRAYS. The Mitochondrial matrix portion of the chain corresponds to 48–114; that stretch reads NESKTGRDAP…SDDISAFISW (67 aa). The chain crosses the membrane as a helical span at residues 115–135; the sequence is ILVSNIFIFIFWTTTFVSLIL. Topologically, residues 136–558 are mitochondrial intermembrane; that stretch reads YLINTVFAQE…DEKRTLRLRR (423 aa). A helical membrane pass occupies residues 559–578; the sequence is VGFWSLQLILQVILMSLGAI. A topological domain (mitochondrial matrix) is located at residue A579.

This sequence belongs to the MDM31/MDM32 family. Interacts with MDM32. Participates in a complex of about 600 kDa.

The protein localises to the mitochondrion inner membrane. Functionally, involved in the organization of the mitochondrial membranes and the global structure of the mitochondria. Also required for mitochondrial distribution and mobility as well as for the maintenance of mitochondrial DNA nucleoids structures. This Saccharomyces cerevisiae (strain ATCC 204508 / S288c) (Baker's yeast) protein is Mitochondrial distribution and morphology protein 31 (MDM31).